The primary structure comprises 189 residues: dTTP/UTP pyrophosphatase (189 aa).

The active-site Proton acceptor is aspartate 73.

Belongs to the Maf family. YhdE subfamily. It depends on a divalent metal cation as a cofactor.

Its subcellular location is the cytoplasm. The catalysed reaction is dTTP + H2O = dTMP + diphosphate + H(+). It carries out the reaction UTP + H2O = UMP + diphosphate + H(+). Its function is as follows. Nucleoside triphosphate pyrophosphatase that hydrolyzes dTTP and UTP. May have a dual role in cell division arrest and in preventing the incorporation of modified nucleotides into cellular nucleic acids. This is dTTP/UTP pyrophosphatase from Vibrio parahaemolyticus serotype O3:K6 (strain RIMD 2210633).